We begin with the raw amino-acid sequence, 3564 residues long: CUB and sushi domain-containing protein 1 (3564 aa).

Residues 1–26 form the signal peptide; that stretch reads MTAWRRFQSLLLLLGLLVLCARLLTA. Over 27–3487 the chain is Extracellular; that stretch reads AKGQNCGGLV…SHYHGTSSGS (3461 aa). Cystine bridges form between Cys32-Cys58, Cys145-Cys185, Cys171-Cys202, Cys208-Cys234, Cys349-Cys389, Cys375-Cys406, Cys411-Cys437, Cys527-Cys567, Cys553-Cys580, and Cys584-Cys610. Residues 32 to 140 enclose the CUB 1 domain; it reads CGGLVQGPNG…QGFKALYEVL (109 aa). N-linked (GlcNAc...) asparagine glycans are attached at residues Asn40 and Asn57. Residues 143 to 204 form the Sushi 1 domain; it reads HTCGNPGEIL…WDFPAPFCRA (62 aa). Positions 208–312 constitute a CUB 2 domain; sequence CGGTLRGTSS…KGFNAQFQVK (105 aa). Residues 347–408 enclose the Sushi 2 domain; that stretch reads DMCPDPGIPE…WSDHRPICRA (62 aa). A CUB 3 domain is found at 411-522; the sequence is CGSNLRGPSG…PGFKAVYQEI (112 aa). In terms of domain architecture, Sushi 3 spans 525–582; the sequence is GGCGDPGIPAYGKRTGSSFLHGDTLTFECPAAFELVGERVITCQQNNQWSGNKPSCVF. The region spanning 584–692 is the CUB 4 domain; sequence CFFNFTASSG…RGFNITYTTF (109 aa). Residues Asn587 and Asn686 are each glycosylated (N-linked (GlcNAc...) asparagine). One can recognise a Sushi 4 domain in the interval 695-756; it reads NECHDPGIPI…WSSTVPRCEA (62 aa). 6 cysteine pairs are disulfide-bonded: Cys697–Cys738, Cys723–Cys754, Cys758–Cys784, Cys873–Cys913, Cys899–Cys926, and Cys930–Cys956. The CUB 5 domain occupies 758–866; sequence CGGHLTASSG…IGFLIHYESV (109 aa). The 58-residue stretch at 871–928 folds into the Sushi 5 domain; sequence DSCLDPGIPVNGHRHGGDFGIRSTVTFSCDPGYTLSDDEPLVCERNHQWNHALPSCDA. Residues 930–1040 form the CUB 6 domain; that stretch reads CGGYIQGKSG…EGFNITFSEY (111 aa). N-linked (GlcNAc...) asparagine glycans are attached at residues Asn955, Asn1015, and Asn1034. Residues 1043-1102 enclose the Sushi 6 domain; it reads EPCDDPGVPAFSRRIGFHFGVGDSLTFSCFLGYRLEGATKLTCLGGGRRVWSAPLPRCVA. Intrachain disulfides connect Cys1045–Cys1085, Cys1071–Cys1100, and Cys1104–Cys1130. The region spanning 1104–1212 is the CUB 7 domain; it reads CGASVKGNEG…QGFQLTYTSF (109 aa). 2 N-linked (GlcNAc...) asparagine glycosylation sites follow: Asn1184 and Asn1197. The 61-residue stretch at 1215 to 1275 folds into the Sushi 7 domain; that stretch reads VKCEDPGIPN…WDKPLPSCIA (61 aa). Cystine bridges form between Cys1217/Cys1258, Cys1244/Cys1273, Cys1277/Cys1304, Cys1391/Cys1431, Cys1417/Cys1447, Cys1451/Cys1477, Cys1564/Cys1604, Cys1590/Cys1621, Cys1625/Cys1651, Cys1741/Cys1781, Cys1767/Cys1798, and Cys1802/Cys1828. Residues 1277–1386 form the CUB 8 domain; the sequence is CGGQIHAATS…SGFSIQFSTS (110 aa). The region spanning 1389–1449 is the Sushi 8 domain; sequence ATCNDPGMPQ…WQPDPPTCIA (61 aa). Asn1399 is a glycosylation site (N-linked (GlcNAc...) asparagine). The CUB 9 domain maps to 1451-1559; it reads CGGNLTGPAG…SGFAIEFKEK (109 aa). Residues Asn1454 and Asn1572 are each glycosylated (N-linked (GlcNAc...) asparagine). One can recognise a Sushi 9 domain in the interval 1562–1623; it reads EACFDPGNIM…WDQVLPSCNA (62 aa). The CUB 10 domain maps to 1625-1733; that stretch reads CGGQYTGSEG…RGFHFVYQAV (109 aa). An N-linked (GlcNAc...) asparagine glycan is attached at Asn1644. The 62-residue stretch at 1739 to 1800 folds into the Sushi 10 domain; that stretch reads TQCSSVPEPR…WNDTIPSCVV (62 aa). 3 N-linked (GlcNAc...) asparagine glycosylation sites follow: Asn1792, Asn1805, and Asn1882. The CUB 11 domain occupies 1802–1910; sequence CSGNFTQRRG…AGFHLEYKTV (109 aa). Residues 1913–1972 enclose the Sushi 11 domain; the sequence is AACQEPALPSNSIKIGDRYMVNDVLSFQCEPGYTLQGRSHISCMPGTVRRWNYPSPLCIA. 3 cysteine pairs are disulfide-bonded: Cys1915/Cys1955, Cys1941/Cys1970, and Cys1974/Cys2000. One can recognise a CUB 12 domain in the interval 1974–2082; sequence CGGTLSTLGG…QGFKLAYQAY (109 aa). N-linked (GlcNAc...) asparagine glycosylation is present at Asn2018. The Sushi 12 domain occupies 2085–2144; the sequence is QNCPDPPPFQNGYMINSDYSVGQSVSFECYPGYILIGHPVLTCQHGINRNWNYPFPRCDA. 3 cysteine pairs are disulfide-bonded: Cys2087–Cys2127, Cys2113–Cys2142, and Cys2146–Cys2172. A CUB 13 domain is found at 2146–2257; it reads CGYNVTSQNG…LNFHAFQLKK (112 aa). 3 N-linked (GlcNAc...) asparagine glycosylation sites follow: Asn2149, Asn2154, and Asn2187. Residues 2256-2317 form the Sushi 13 domain; the sequence is KKCQPPPAVP…FEGSLPTCEA (62 aa). 3 disulfides stabilise this stretch: Cys2258-Cys2300, Cys2286-Cys2315, and Cys2319-Cys2347. Residues 2319 to 2430 enclose the CUB 14 domain; sequence CPANEVRTGS…KGFKIRYAAP (112 aa). N-linked (GlcNAc...) asparagine glycans are attached at residues Asn2358, Asn2394, Asn2400, Asn2445, Asn2470, and Asn2503. Sushi domains are found at residues 2430–2492, 2493–2554, 2555–2619, 2620–2677, 2678–2735, 2736–2793, 2794–2856, 2857–2914, 2918–2975, 2976–3034, 3035–3094, 3095–3152, 3153–3210, 3214–3272, and 3273–3332; these read PYCS…LCQA, VSCG…TCKP, VACP…SCRV, ISCG…RCLA, GHCG…VCVP, ITCG…TCRV, VNCS…KCLA, ISCG…HCTG, GFCG…VCEA, VSCG…DCTI, ISCG…VCKA, VLCP…QCLP, VFCG…TCID, NTCP…ECIP, and HACR…VCKS. 12 disulfides stabilise this stretch: Cys2432/Cys2473, Cys2459/Cys2490, Cys2495/Cys2537, Cys2521/Cys2552, Cys2557/Cys2602, Cys2588/Cys2617, Cys2622/Cys2662, Cys2648/Cys2675, Cys2680/Cys2720, Cys2706/Cys2733, Cys2738/Cys2778, and Cys2764/Cys2791. An N-linked (GlcNAc...) asparagine glycan is attached at Asn2605. Asn2750 and Asn2761 each carry an N-linked (GlcNAc...) asparagine glycan. Residue Asn2795 is glycosylated (N-linked (GlcNAc...) asparagine). 18 disulfide bridges follow: Cys2796-Cys2841, Cys2827-Cys2854, Cys2859-Cys2899, Cys2885-Cys2912, Cys2920-Cys2960, Cys2946-Cys2973, Cys2978-Cys3019, Cys3005-Cys3032, Cys3037-Cys3079, Cys3063-Cys3092, Cys3097-Cys3137, Cys3123-Cys3150, Cys3155-Cys3195, Cys3181-Cys3208, Cys3216-Cys3257, Cys3243-Cys3270, Cys3275-Cys3317, and Cys3302-Cys3330. Residue Asn2894 is glycosylated (N-linked (GlcNAc...) asparagine). N-linked (GlcNAc...) asparagine glycosylation is present at Asn2963. 2 N-linked (GlcNAc...) asparagine glycosylation sites follow: Asn3022 and Asn3056. Asn3105 carries an N-linked (GlcNAc...) asparagine glycan. 2 N-linked (GlcNAc...) asparagine glycosylation sites follow: Asn3228 and Asn3260. 3 N-linked (GlcNAc...) asparagine glycosylation sites follow: Asn3339, Asn3379, and Asn3386. The chain crosses the membrane as a helical span at residues 3488–3508; sequence VAAAILVPFFALILSGFAFYL. Residues 3509-3564 are Cytoplasmic-facing; the sequence is YKHRTRPKVQYNGYAGHENSNGQASFENPMYDTNLKPTEAKAVRFDTTLNTVCTVV.

This sequence belongs to the CSMD family. Weakly expressed in most tissues, except in brain. Expressed at intermediate level in brain, including cerebellum, substantia nigra, hippocampus and fetal brain.

It localises to the membrane. In terms of biological role, potential suppressor of squamous cell carcinomas. This is CUB and sushi domain-containing protein 1 (CSMD1) from Homo sapiens (Human).